We begin with the raw amino-acid sequence, 501 residues long: Aldehyde dehydrogenase family 2 member C4 (501 aa).

Gly245–Gly250 contributes to the NAD(+) binding site. Residue Glu268 is the Proton acceptor of the active site. Residue Cys302 is the Nucleophile of the active site.

It belongs to the aldehyde dehydrogenase family. Homotetramer.

Its subcellular location is the cytoplasm. The protein resides in the cytosol. It catalyses the reaction an aldehyde + NAD(+) + H2O = a carboxylate + NADH + 2 H(+). Functionally, involved in ferulic acid and sinapic acid biosynthesis by oxidation of conyferylaldehyde and sinapaldehyde, respectively. Can oxidize L-lactaldehyde. Possesses activity on acetaldehyde and glycolaldehyde in vitro. This Arabidopsis thaliana (Mouse-ear cress) protein is Aldehyde dehydrogenase family 2 member C4 (ALDH2C4).